The primary structure comprises 412 residues: Zinc finger protein 821 (412 aa).

The interval 26–83 is disordered; it reads RQAMMKTDFPGDLGSQRQAIQQLRDQDSSSSDSEGDEEETTQDEVSSHTSEEDGGVVK. The segment covering 58-67 has biased composition (acidic residues); it reads SEGDEEETTQ. 2 C2H2-type zinc fingers span residues 116–140 and 150–172; these read ELCQ…VYQH and YMCP…LLIH. A coiled-coil region spans residues 257–366; it reads KWALRRQNEP…EKMDMMLRAQ (110 aa). Residues 278–319 are disordered; that stretch reads RTAKKSRRDNETPEEREVRRMRDREAKRLQRMQETDEQRARR.

This sequence belongs to the krueppel C2H2-type zinc-finger protein family.

It is found in the nucleus. Its function is as follows. May be involved in transcriptional regulation. The protein is Zinc finger protein 821 (ZNF821) of Homo sapiens (Human).